Reading from the N-terminus, the 295-residue chain is Bifunctional protein FolD (295 aa).

NADP(+)-binding positions include Gly165–Gly167, Ser192, and Ile233.

Belongs to the tetrahydrofolate dehydrogenase/cyclohydrolase family. Homodimer.

It catalyses the reaction (6R)-5,10-methylene-5,6,7,8-tetrahydrofolate + NADP(+) = (6R)-5,10-methenyltetrahydrofolate + NADPH. The catalysed reaction is (6R)-5,10-methenyltetrahydrofolate + H2O = (6R)-10-formyltetrahydrofolate + H(+). The protein operates within one-carbon metabolism; tetrahydrofolate interconversion. Functionally, catalyzes the oxidation of 5,10-methylenetetrahydrofolate to 5,10-methenyltetrahydrofolate and then the hydrolysis of 5,10-methenyltetrahydrofolate to 10-formyltetrahydrofolate. The polypeptide is Bifunctional protein FolD (Tropheryma whipplei (strain TW08/27) (Whipple's bacillus)).